A 254-amino-acid polypeptide reads, in one-letter code: Rho-related protein racD (254 aa).

15–22 provides a ligand contact to GTP; the sequence is GDGAVGKT. Residues 37–45 carry the Effector region motif; that stretch reads YVPTVFDNF. Residues 62–66 and 120–123 each bind GTP; these read DTAGQ and TKTD. A compositionally biased stretch (low complexity) spans 186–231; sequence AVTSPTSKSSGKSSPSSTSSKPSKTTTTTTTSSSSSSPPAASTAKP. Positions 186-254 are disordered; the sequence is AVTSPTSKSS…KDKDEKKPAK (69 aa). Residues 232 to 254 are compositionally biased toward basic and acidic residues; that stretch reads AGEKKLSWGLFRKKDKDEKKPAK.

The protein belongs to the small GTPase superfamily. Rho family.

This Dictyostelium discoideum (Social amoeba) protein is Rho-related protein racD (racD).